Here is a 155-residue protein sequence, read N- to C-terminus: MQFTLAAAAALFGASALAAPASPGSTGAPPDPNMYENIDIADFNVRKGEDGTIKYVNFKLSGDDADGLLCEAQNPGLPSNVITCGESKYRFALSSGKQYEFALSLYHELGLAVGFYGTGEIFTHCRAGGLGDFICQQQNPTTIVIDSLPDAPAEA.

The N-terminal stretch at 1–18 (MQFTLAAAAALFGASALA) is a signal peptide. The region spanning 33 to 148 (NMYENIDIAD…NPTTIVIDSL (116 aa)) is the AA1-like domain. 2 disulfide bridges follow: Cys-70–Cys-84 and Cys-125–Cys-135.

In terms of assembly, monomer. Interacts with Arabidopsis thaliana NRP.

The protein localises to the secreted. In terms of biological role, effector protein. Elicits a hypersensitive response (HR) in tobacco plants (N.tabacum) and cotton (G.hirsutum). Boosts systemic acquired resistance (SAR) to tobacco mosaic virus (TMV) infection in N.tabacum and to V.dhaliae infection in primed cotton seedlings. The sequence is that of Effector protein PevD1 from Verticillium dahliae (Verticillium wilt).